A 603-amino-acid chain; its full sequence is Bifunctional 3-dehydroquinate dehydratase/shikimate dehydrogenase, chloroplastic (603 aa).

The span at 1–10 (MAASSTNARL) shows a compositional bias: polar residues. Residues 1–22 (MAASSTNARLTNPPRLLSKPRL) are disordered. Residues 1–66 (MAASSTNARL…VVFSDQRRRR (66 aa)) constitute a chloroplast transit peptide. Residues 13-22 (PPRLLSKPRL) are compositionally biased toward low complexity. The 3-dehydroquinate dehydratase stretch occupies residues 96–313 (ICAPVMADSI…QPTIKDLLDL (218 aa)). 3-dehydroshikimate-binding residues include Glu124, Arg126, and Arg155. His214 functions as the Proton acceptor; for 3-dehydroquinate dehydratase activity in the catalytic mechanism. Residues Lys241, Arg279, Ser300, and Gln304 each coordinate 3-dehydroshikimate. Lys241 acts as the Schiff-base intermediate with substrate; for 3-dehydroquinate dehydratase activity in catalysis. Residues 328–558 (IIGKPVSHSK…VYTPRITRLL (231 aa)) are shikimate dehydrogenase. Ser336, Ser338, Thr381, Lys385, Asn406, and Asp423 together coordinate shikimate. The active-site For shikimate dehydrogenase activity is the Lys385. Catalysis depends on Asp423, which acts as the For shikimate dehydrogenase activity. NADP(+) contacts are provided by Ala461, Gly463, Ala464, Asn483, Thr485, Arg488, Met525, and Ala548. Position 550 (Tyr550) interacts with shikimate. Gly571 provides a ligand contact to NADP(+). Residues Gln578 and Gln582 each coordinate shikimate.

This sequence in the N-terminal section; belongs to the type-I 3-dehydroquinase family. It in the C-terminal section; belongs to the shikimate dehydrogenase family. Monomer.

Its subcellular location is the plastid. The protein localises to the chloroplast. It carries out the reaction 3-dehydroquinate = 3-dehydroshikimate + H2O. The catalysed reaction is shikimate + NADP(+) = 3-dehydroshikimate + NADPH + H(+). It functions in the pathway metabolic intermediate biosynthesis; chorismate biosynthesis; chorismate from D-erythrose 4-phosphate and phosphoenolpyruvate: step 3/7. The protein operates within metabolic intermediate biosynthesis; chorismate biosynthesis; chorismate from D-erythrose 4-phosphate and phosphoenolpyruvate: step 4/7. In terms of biological role, bifunctional dehydroquinate dehydratase-shikimate dehydrogenase enzyme that catalyzes two steps in the chorismate biosynthesis pathway. The sequence is that of Bifunctional 3-dehydroquinate dehydratase/shikimate dehydrogenase, chloroplastic from Arabidopsis thaliana (Mouse-ear cress).